Here is a 160-residue protein sequence, read N- to C-terminus: 6,7-dimethyl-8-ribityllumazine synthase (160 aa).

Residues phenylalanine 22, 57 to 59 (TYE), and 81 to 83 (TII) each bind 5-amino-6-(D-ribitylamino)uracil. 86–87 (QT) is a binding site for (2S)-2-hydroxy-3-oxobutyl phosphate. Histidine 89 serves as the catalytic Proton donor. Leucine 114 is a 5-amino-6-(D-ribitylamino)uracil binding site. Arginine 128 serves as a coordination point for (2S)-2-hydroxy-3-oxobutyl phosphate.

It belongs to the DMRL synthase family. As to quaternary structure, forms an icosahedral capsid composed of 60 subunits, arranged as a dodecamer of pentamers.

The enzyme catalyses (2S)-2-hydroxy-3-oxobutyl phosphate + 5-amino-6-(D-ribitylamino)uracil = 6,7-dimethyl-8-(1-D-ribityl)lumazine + phosphate + 2 H2O + H(+). Its pathway is cofactor biosynthesis; riboflavin biosynthesis; riboflavin from 2-hydroxy-3-oxobutyl phosphate and 5-amino-6-(D-ribitylamino)uracil: step 1/2. Its function is as follows. Catalyzes the formation of 6,7-dimethyl-8-ribityllumazine by condensation of 5-amino-6-(D-ribitylamino)uracil with 3,4-dihydroxy-2-butanone 4-phosphate. This is the penultimate step in the biosynthesis of riboflavin. The polypeptide is 6,7-dimethyl-8-ribityllumazine synthase (Buchnera aphidicola subsp. Acyrthosiphon pisum (strain APS) (Acyrthosiphon pisum symbiotic bacterium)).